The primary structure comprises 359 residues: MNPCQIFASLVMSICCHILSSTAWSVNNFLMTGPKAYLAYTSSVQAGAQSGIEECKHQFAWDRWNCPESALQLSTHKGLRSATRETAFVHAISAAGVMYTLTKNCSMGDFENCGCDDSKIGKMGGRGWVWGGCSDNVNFGDRIAKLFVDALENGHDSRAAVNLHNNEAGRLAVKATLKRTCKCHGLSGSCSIQTCWMQLADFRDIGSYLKIKHDQARKLEMDKIRMRAGNSADNRGAIADTFSAVARTELIFMEDSPDYCVKNLSMGLHGTEGRECLQSGKNLSQWERRSCRRLCHECGLKVEERRIETVSSCNCKFHWCCTVKCETCTQTVTRYFCAKRHRNRRPHNHSRKRQHTRRG.

A signal peptide spans 1–25; it reads MNPCQIFASLVMSICCHILSSTAWS. The cysteines at positions 55 and 66 are disulfide-linked. A glycan (N-linked (GlcNAc...) asparagine) is linked at Asn104. Disulfide bonds link Cys105-Cys113, Cys115-Cys133, Cys181-Cys195, Cys183-Cys190, Cys260-Cys298, Cys276-Cys291, Cys295-Cys337, Cys313-Cys328, Cys315-Cys325, and Cys320-Cys321. Ser187 carries the O-palmitoleoyl serine lipid modification. 2 N-linked (GlcNAc...) asparagine glycosylation sites follow: Asn263 and Asn282. An N-linked (GlcNAc...) asparagine glycan is attached at Asn348.

Belongs to the Wnt family. In terms of processing, palmitoleoylation is required for efficient binding to frizzled receptors. Depalmitoleoylation leads to Wnt signaling pathway inhibition. Proteolytic processing by tiki1 and tiki2 promotes oxidation and formation of large disulfide-bond oligomers, leading to inactivation of wnt8. As to expression, expressed in the margin of the pregastrula embryo destined to be the future mesoderm.

The protein localises to the secreted. It is found in the extracellular space. It localises to the extracellular matrix. Functionally, ligand for members of the frizzled family of seven transmembrane receptors. Required for mesoderm and neural ectoderm patterning during gastrulation. Involved in axis formation during embryonic development, via activation of canonical Wnt/CTNNB1 signaling. May be involved in the specification of the spatial patterns of expression of Gsc and other regulatory genes leading to the establishment of the embryonic axis. The chain is Protein Wnt-8a (wnt8a) from Danio rerio (Zebrafish).